The sequence spans 87 residues: Down syndrome critical region protein 10 (87 aa).

Expressed in placenta and testis.

The sequence is that of Down syndrome critical region protein 10 (DSCR10) from Homo sapiens (Human).